The following is a 328-amino-acid chain: UPF0324 membrane protein AF_1621 (328 aa).

Helical transmembrane passes span 21–39 (LQML…IINL), 43–60 (ALEP…AGNL), 73–95 (YVPF…PYLG), 101–123 (IVAA…SSRL), 130–152 (SILL…SPLI), 162–184 (AIMI…AHYA), 191–213 (FAVL…QLFG), 223–240 (GIRI…SIIY), 245–267 (FYVP…YLPG), 271–293 (QALR…YTVN), and 305–327 (LFAS…GSGA).

It belongs to the UPF0324 family.

It localises to the cell membrane. The sequence is that of UPF0324 membrane protein AF_1621 from Archaeoglobus fulgidus (strain ATCC 49558 / DSM 4304 / JCM 9628 / NBRC 100126 / VC-16).